Consider the following 159-residue polypeptide: Sperm acrosome-associated protein 5 (159 aa).

A signal peptide spans Met1 to Ala21. A C-type lysozyme domain is found at Lys22–His150. Cystine bridges form between Cys27–Cys147, Cys51–Cys135, Cys85–Cys100, and Cys96–Cys114. The active site involves Glu56.

It belongs to the glycosyl hydrolase 22 family.

Its subcellular location is the secreted. The catalysed reaction is Hydrolysis of (1-&gt;4)-beta-linkages between N-acetylmuramic acid and N-acetyl-D-glucosamine residues in a peptidoglycan and between N-acetyl-D-glucosamine residues in chitodextrins.. The chain is Sperm acrosome-associated protein 5 (SPACA5) from Homo sapiens (Human).